The sequence spans 430 residues: Adenylosuccinate synthetase (430 aa).

GTP is bound by residues 12 to 18 (GDEGKGK) and 40 to 42 (GHT). D13 (proton acceptor) is an active-site residue. Mg(2+)-binding residues include D13 and G40. Residues 13–16 (DEGK), 38–41 (NAGH), T130, R144, Q224, T239, and R303 each bind IMP. H41 serves as the catalytic Proton donor. Residue 299-305 (TNTGRPR) coordinates substrate. GTP contacts are provided by residues R305, 331–333 (KLD), and 413–415 (STS).

The protein belongs to the adenylosuccinate synthetase family. Homodimer. Requires Mg(2+) as cofactor.

Its subcellular location is the cytoplasm. It catalyses the reaction IMP + L-aspartate + GTP = N(6)-(1,2-dicarboxyethyl)-AMP + GDP + phosphate + 2 H(+). The protein operates within purine metabolism; AMP biosynthesis via de novo pathway; AMP from IMP: step 1/2. Its function is as follows. Plays an important role in the de novo pathway of purine nucleotide biosynthesis. Catalyzes the first committed step in the biosynthesis of AMP from IMP. This is Adenylosuccinate synthetase from Rhodopseudomonas palustris (strain BisB5).